The sequence spans 152 residues: Cytochrome c-type biogenesis CcmH-like mitochondrial protein (152 aa).

Over 1-83 (MATEEDVKQR…ILYTPKFDLQ (83 aa)) the chain is Mitochondrial intermembrane. Residues C26 and C29 each contribute to the heme site. A helical membrane pass occupies residues 84 to 104 (TAAIWLSPVIVGGVAAGVWAY). Residues 105-152 (QKHRQRTNVHIMALNLVRGVPLTPREKETMLDVLTPPPPANKWWWPGK) are Mitochondrial matrix-facing.

Belongs to the CcmH/CycL/Ccl2/NrfF family.

It localises to the mitochondrion inner membrane. Functionally, plays a role in mitochondrial cytochrome c maturation. Probable component of a heme lyase complex involved in the reduction of apocytochrome c. This chain is Cytochrome c-type biogenesis CcmH-like mitochondrial protein, found in Oryza sativa subsp. japonica (Rice).